Reading from the N-terminus, the 393-residue chain is Decapping nuclease dom-3 (393 aa).

The segment at 1 to 37 is disordered; sequence MSHYGGNPRGNSSHQFGRKDFQQSDSKHIPKITGQPL. The segment covering 17 to 28 has biased composition (basic and acidic residues); the sequence is GRKDFQQSDSKH. Substrate-binding positions include Arg74, Glu113, and 144 to 146; that span reads WRG. Residues Glu205, Glu257, Asp259, Glu269, and Leu270 each coordinate Mg(2+). Glu257 contacts substrate. Residues Lys271 and Gln293 each contribute to the substrate site.

The protein belongs to the DXO/Dom3Z family. Mg(2+) is required as a cofactor.

The catalysed reaction is a 5'-end NAD(+)-phospho-ribonucleoside in mRNA + H2O = a 5'-end phospho-ribonucleoside in mRNA + NAD(+) + H(+). The enzyme catalyses a 5'-end (N(7)-methyl 5'-triphosphoguanosine)-ribonucleoside-ribonucleotide in mRNA + H2O = a (N(7)-methyl 5'-triphosphoguanosine)-nucleoside + a 5'-end phospho-ribonucleoside in mRNA + H(+). It carries out the reaction a 5'-end triphospho-ribonucleoside in mRNA + H2O = a 5'-end phospho-ribonucleoside in mRNA + diphosphate + H(+). Functionally, decapping enzyme for NAD-capped RNAs: specifically hydrolyzes the nicotinamide adenine dinucleotide (NAD) cap from a subset of RNAs by removing the entire NAD moiety from the 5'-end of an NAD-capped RNA. The NAD-cap is present at the 5'-end of some RNAs and snoRNAs. In contrast to the canonical 5'-end N7 methylguanosine (m7G) cap, the NAD cap promotes mRNA decay. Also acts as a non-canonical decapping enzyme that removes the entire cap structure of m7G capped or incompletely capped RNAs and mediates their subsequent degradation. Specifically degrades pre-mRNAs with a defective 5'-end m7G cap and is part of a pre-mRNA capping quality control. Also possesses RNA 5'-pyrophosphohydrolase activity by hydrolyzing the 5'-end triphosphate to release pyrophosphates. The protein is Decapping nuclease dom-3 of Caenorhabditis elegans.